The sequence spans 293 residues: Protease HtpX homolog (293 aa).

Transmembrane regions (helical) follow at residues 4 to 24 and 39 to 59; these read IFLFVATNIAVIAVMSIVLSL and PMLLVFSLVVGFTGAIISLLI. Residue H144 coordinates Zn(2+). The active site involves E145. H148 provides a ligand contact to Zn(2+). 2 helical membrane passes run 159–179 and 200–220; these read LVQGVVNTFVVFLARVVGYFV and ITVLVCQVVFGIAASVIVAWF. Residue E225 coordinates Zn(2+).

This sequence belongs to the peptidase M48B family. Zn(2+) is required as a cofactor.

It localises to the cell inner membrane. In Herminiimonas arsenicoxydans, this protein is Protease HtpX homolog.